Consider the following 195-residue polypeptide: Small ribosomal subunit protein uS4B (195 aa).

Residues 107–181 enclose the S4 RNA-binding domain; sequence RRLQTQVYKL…VARRNAARKA (75 aa). The interval 161–195 is disordered; that stretch reads TSPFGGARPGRVARRNAARKAEASGEAAEEAEDEE. A Glycyl lysine isopeptide (Lys-Gly) (interchain with G-Cter in ubiquitin) cross-link involves residue Lys180. Residue Ser184 is modified to Phosphoserine.

This sequence belongs to the universal ribosomal protein uS4 family. Component of the small ribosomal subunit (SSU). Mature yeast ribosomes consist of a small (40S) and a large (60S) subunit. The 40S small subunit contains 1 molecule of ribosomal RNA (18S rRNA) and 33 different proteins (encoded by 57 genes). The large 60S subunit contains 3 rRNA molecules (25S, 5.8S and 5S rRNA) and 46 different proteins (encoded by 81 genes). Interacts with snoRNA U3. uS11 interacts with MPP10. Component of the ribosomal small subunit (SSU) processome composed of at least 40 protein subunits and snoRNA U3.

The protein resides in the cytoplasm. It is found in the nucleus. Its subcellular location is the nucleolus. Functionally, component of the ribosome, a large ribonucleoprotein complex responsible for the synthesis of proteins in the cell. The small ribosomal subunit (SSU) binds messenger RNAs (mRNAs) and translates the encoded message by selecting cognate aminoacyl-transfer RNA (tRNA) molecules. The large subunit (LSU) contains the ribosomal catalytic site termed the peptidyl transferase center (PTC), which catalyzes the formation of peptide bonds, thereby polymerizing the amino acids delivered by tRNAs into a polypeptide chain. The nascent polypeptides leave the ribosome through a tunnel in the LSU and interact with protein factors that function in enzymatic processing, targeting, and the membrane insertion of nascent chains at the exit of the ribosomal tunnel. uS4 is involved in nucleolar processing of pre-18S ribosomal RNA and ribosome assembly. The sequence is that of Small ribosomal subunit protein uS4B from Saccharomyces cerevisiae (strain ATCC 204508 / S288c) (Baker's yeast).